Reading from the N-terminus, the 629-residue chain is tRNA uridine 5-carboxymethylaminomethyl modification enzyme MnmG (629 aa).

13–18 (GGGHAG) is a binding site for FAD. 273-287 (GPRYCPSIEDKIHRF) is an NAD(+) binding site.

Belongs to the MnmG family. As to quaternary structure, homodimer. Heterotetramer of two MnmE and two MnmG subunits. Requires FAD as cofactor.

The protein resides in the cytoplasm. In terms of biological role, NAD-binding protein involved in the addition of a carboxymethylaminomethyl (cmnm) group at the wobble position (U34) of certain tRNAs, forming tRNA-cmnm(5)s(2)U34. The sequence is that of tRNA uridine 5-carboxymethylaminomethyl modification enzyme MnmG from Shewanella baltica (strain OS185).